A 313-amino-acid chain; its full sequence is Beta-ketoacyl-[acyl-carrier-protein] synthase III (313 aa).

Residues Cys-112 and His-238 contribute to the active site. The segment at Gln-239 to Arg-243 is ACP-binding. Asn-268 is an active-site residue.

It belongs to the thiolase-like superfamily. FabH family. Homodimer.

It is found in the cytoplasm. The catalysed reaction is malonyl-[ACP] + acetyl-CoA + H(+) = 3-oxobutanoyl-[ACP] + CO2 + CoA. It participates in lipid metabolism; fatty acid biosynthesis. Functionally, catalyzes the condensation reaction of fatty acid synthesis by the addition to an acyl acceptor of two carbons from malonyl-ACP. Catalyzes the first condensation reaction which initiates fatty acid synthesis and may therefore play a role in governing the total rate of fatty acid production. Possesses both acetoacetyl-ACP synthase and acetyl transacylase activities. Its substrate specificity determines the biosynthesis of branched-chain and/or straight-chain of fatty acids. The polypeptide is Beta-ketoacyl-[acyl-carrier-protein] synthase III (Staphylococcus haemolyticus (strain JCSC1435)).